Reading from the N-terminus, the 641-residue chain is UvrABC system protein C (641 aa).

The GIY-YIG domain maps to 16-95; sequence ESPGVYRFWD…IKQYEPRFNI (80 aa). The region spanning 208 to 243 is the UVR domain; sequence TEYLRRLEKDMRAAAAAEDFERAARLRDDAAALRLA.

This sequence belongs to the UvrC family. As to quaternary structure, interacts with UvrB in an incision complex.

The protein localises to the cytoplasm. In terms of biological role, the UvrABC repair system catalyzes the recognition and processing of DNA lesions. UvrC both incises the 5' and 3' sides of the lesion. The N-terminal half is responsible for the 3' incision and the C-terminal half is responsible for the 5' incision. This chain is UvrABC system protein C, found in Acidothermus cellulolyticus (strain ATCC 43068 / DSM 8971 / 11B).